A 345-amino-acid polypeptide reads, in one-letter code: Phosphoribosylformylglycinamidine cyclo-ligase (345 aa).

Belongs to the AIR synthase family.

It is found in the cytoplasm. It carries out the reaction 2-formamido-N(1)-(5-O-phospho-beta-D-ribosyl)acetamidine + ATP = 5-amino-1-(5-phospho-beta-D-ribosyl)imidazole + ADP + phosphate + H(+). The protein operates within purine metabolism; IMP biosynthesis via de novo pathway; 5-amino-1-(5-phospho-D-ribosyl)imidazole from N(2)-formyl-N(1)-(5-phospho-D-ribosyl)glycinamide: step 2/2. In Salmonella choleraesuis (strain SC-B67), this protein is Phosphoribosylformylglycinamidine cyclo-ligase.